Consider the following 384-residue polypeptide: Viral protein 1 (384 aa).

This chain is Viral protein 1, found in Chaetoceros setoense (Chaetoceros setoense DNA virus).